A 27-amino-acid polypeptide reads, in one-letter code: Delta-conotoxin TxVIB (27 aa).

3 disulfide bridges follow: cysteine 2–cysteine 17, cysteine 9–cysteine 21, and cysteine 16–cysteine 26.

This sequence belongs to the conotoxin O1 superfamily. Expressed by the venom duct.

Its subcellular location is the secreted. Functionally, delta-conotoxins bind to site 6 of voltage-gated sodium channels (Nav) and inhibit the inactivation process. Induces membrane depolarization and spontaneous repetitive firing of neurons. This is Delta-conotoxin TxVIB from Conus textile (Cloth-of-gold cone).